A 402-amino-acid chain; its full sequence is Chorismate synthase (402 aa).

Residues R40 and R46 each coordinate NADP(+). FMN contacts are provided by residues 134-136, 255-256, G299, 314-318, and R340; these read RAS, QA, and KPIAT.

This sequence belongs to the chorismate synthase family. Homotetramer. Requires FMNH2 as cofactor.

The enzyme catalyses 5-O-(1-carboxyvinyl)-3-phosphoshikimate = chorismate + phosphate. Its pathway is metabolic intermediate biosynthesis; chorismate biosynthesis; chorismate from D-erythrose 4-phosphate and phosphoenolpyruvate: step 7/7. Its function is as follows. Catalyzes the anti-1,4-elimination of the C-3 phosphate and the C-6 proR hydrogen from 5-enolpyruvylshikimate-3-phosphate (EPSP) to yield chorismate, which is the branch point compound that serves as the starting substrate for the three terminal pathways of aromatic amino acid biosynthesis. This reaction introduces a second double bond into the aromatic ring system. This chain is Chorismate synthase, found in Leifsonia xyli subsp. xyli (strain CTCB07).